A 209-amino-acid polypeptide reads, in one-letter code: MPADTPIRKKPNAYASVVDPDTGYCTPGAFELERLFWHGAPKYNHVNEVWPNLYIGDEKTALDRYSLEKNGFTHILNAAHGRWNVDTGPEYYSDITVEYYGVEAEDLPSFNLSQFFYPAAQFIRNALSSPSSKVLVNCAMGRSRSASLVLAYLMIYENMTVVDSIMQVLKHRCILPNRGFLKQLRELDIQLALERRGTEDTAKKAQKDD.

Residues 44–193 (NHVNEVWPNL…LRELDIQLAL (150 aa)) enclose the Tyrosine-protein phosphatase domain. 137-144 (NCAMGRSR) contacts substrate. Cys-138 acts as the Phosphocysteine intermediate in catalysis.

It belongs to the protein-tyrosine phosphatase family. Non-receptor class dual specificity subfamily.

The protein resides in the cytoplasm. The protein localises to the nucleus. It catalyses the reaction O-phospho-L-tyrosyl-[protein] + H2O = L-tyrosyl-[protein] + phosphate. The catalysed reaction is O-phospho-L-seryl-[protein] + H2O = L-seryl-[protein] + phosphate. It carries out the reaction O-phospho-L-threonyl-[protein] + H2O = L-threonyl-[protein] + phosphate. In terms of biological role, dual specificity phosphatase able to dephosphorylate phosphotyrosine, phosphoserine and phosphothreonine residues within the same substrate, with a preference for phosphotyrosine as a substrate. Involved in the modulation of AMPK and MAPK1/2 signaling pathways. This chain is Dual specificity phosphatase 29 (dusp29), found in Xenopus tropicalis (Western clawed frog).